Here is a 241-residue protein sequence, read N- to C-terminus: uncharacterized protein (241 aa).

Residues 22–78 form the Cupin type-2 domain; that stretch reads SHKHAYSQFLFPLEGSIDLETEGRQVKLNPDHFLYIPPQCEHRFRSIGRNECLVLDV. Positions 137–235 constitute an HTH araC/xylS-type domain; the sequence is YASIAYIHSH…GMPPRLYRNT (99 aa). DNA-binding regions (H-T-H motif) lie at residues 154–175 and 202–225; these read KKLAEIEHYHPAYYSSWFKKQT and LTVVSEALGFQNLSSFTRWFTKST.

This is an uncharacterized protein from Bacillus subtilis (strain 168).